The primary structure comprises 185 residues: Potassium-transporting ATPase KdpC subunit 2 (185 aa).

The helical transmembrane segment at 8 to 28 threads the bilayer; that stretch reads LGLVLIMFVLCGFIFPLTVTA.

It belongs to the KdpC family. In terms of assembly, the system is composed of three essential subunits: KdpA, KdpB and KdpC.

It is found in the cell membrane. The protein localises to the membrane raft. Its function is as follows. Part of the high-affinity ATP-driven potassium transport (or Kdp) system, which catalyzes the hydrolysis of ATP coupled with the electrogenic transport of potassium into the cytoplasm. This subunit acts as a catalytic chaperone that increases the ATP-binding affinity of the ATP-hydrolyzing subunit KdpB by the formation of a transient KdpB/KdpC/ATP ternary complex. The chain is Potassium-transporting ATPase KdpC subunit 2 from Staphylococcus aureus (strain Mu50 / ATCC 700699).